A 400-amino-acid polypeptide reads, in one-letter code: Elongation factor Tu (400 aa).

Residues Lys10 to Arg210 enclose the tr-type G domain. A G1 region spans residues Gly19 to Thr26. A GTP-binding site is contributed by Gly19 to Thr26. Thr26 is a Mg(2+) binding site. The tract at residues Gly60–Ala64 is G2. The segment at Asp81 to Gly84 is G3. GTP is bound by residues Asp81–His85 and Asn136–Asp139. The interval Asn136–Asp139 is G4. The interval Ser174–Ile176 is G5.

This sequence belongs to the TRAFAC class translation factor GTPase superfamily. Classic translation factor GTPase family. EF-Tu/EF-1A subfamily. Monomer.

It localises to the cytoplasm. The enzyme catalyses GTP + H2O = GDP + phosphate + H(+). In terms of biological role, GTP hydrolase that promotes the GTP-dependent binding of aminoacyl-tRNA to the A-site of ribosomes during protein biosynthesis. This is Elongation factor Tu from Dehalococcoides mccartyi (strain ATCC BAA-2266 / KCTC 15142 / 195) (Dehalococcoides ethenogenes (strain 195)).